The chain runs to 147 residues: Sec-independent protein translocase protein TatB (147 aa).

A helical membrane pass occupies residues phenylalanine 2–glycine 22. The tract at residues glutamate 68–glycine 147 is disordered. Polar residues predominate over residues glycine 71–tyrosine 97. Residues proline 112–proline 133 are compositionally biased toward low complexity.

It belongs to the TatB family. The Tat system comprises two distinct complexes: a TatABC complex, containing multiple copies of TatA, TatB and TatC subunits, and a separate TatA complex, containing only TatA subunits. Substrates initially bind to the TatABC complex, which probably triggers association of the separate TatA complex to form the active translocon.

It localises to the cell inner membrane. In terms of biological role, part of the twin-arginine translocation (Tat) system that transports large folded proteins containing a characteristic twin-arginine motif in their signal peptide across membranes. Together with TatC, TatB is part of a receptor directly interacting with Tat signal peptides. TatB may form an oligomeric binding site that transiently accommodates folded Tat precursor proteins before their translocation. The polypeptide is Sec-independent protein translocase protein TatB (Shewanella sp. (strain MR-4)).